The sequence spans 333 residues: MIDITLPLTDIHRHLDGNIRAQTILDLGRQFNIALPAQTLETLIPHVQVTSTEPDLVSFLTKLDWGVKVLASLDACRRVAFENIEDAARNGLHYVELRFSPGYMAMAHQLPIAGVVEAVIDGVRDGCNTFGVEARLIGIMSRTFGEAACLQELDALLAHRENITALDLAGDELGFPGSLFLSHFNRARDAGWHITVHAGEAAGPESIWQAIRELGAERIGHGVKAVEDRALMDFLVQQRIGIESCLTSNIQTSTVASLADHPLKTFLEHGVLASLNTDDPAVQGVDIIHEYHVAAPAAGLSREQIRQAQINGLEIAFLSDGEKRALREKVAAA.

The Zn(2+) site is built by His12 and His14. Residues His14, Asp16, and Gly170 each contribute to the substrate site. His197 contacts Zn(2+). The active-site Proton donor is the Glu200. Asp278 lines the Zn(2+) pocket. Residue Asp279 participates in substrate binding.

The protein belongs to the metallo-dependent hydrolases superfamily. Adenosine and AMP deaminases family. Adenosine deaminase subfamily. Zn(2+) is required as a cofactor.

The enzyme catalyses adenosine + H2O + H(+) = inosine + NH4(+). It carries out the reaction 2'-deoxyadenosine + H2O + H(+) = 2'-deoxyinosine + NH4(+). In terms of biological role, catalyzes the hydrolytic deamination of adenosine and 2-deoxyadenosine. The sequence is that of Adenosine deaminase from Salmonella enteritidis PT4 (strain P125109).